A 786-amino-acid polypeptide reads, in one-letter code: MSGVSEEDPEGLGPQGLPALGGACLVTVDKKLNVLTEKVDRLLHFQEDVTEKLQCVCQGMDHLEQGLHRLEASQELGLAGPGSTSPAAAQAAWPEVLELVRAVRQEGAQHGARLEALFKMVVAVDRAITLVGSTIQNSKVDDFILQGTVPWRKGSLADGPEENKEQAEVAGVKPKHVLNTGSVQAATSRALWEESQKQDTPVGTVEGLPLIIDTSLKGADLTQAGASLRQGVEALDPGQEPPPTEAESRLPALASEDTGTTLELSVAIDRISEVLTSLRMSQSAGEGTSSSKPDCSEPGPQPLGPLTTDSDIHSDEGLPRISVRMREMTTPEELFETQGGSPIGSAEAPGPGTVLEDQIPKGARPFPPLPKRSCNNGGASAEEATGPGAEPIRGPSLVTRDWRDEPVGTTDLQQGRDPGAVSPEPGKDHAAQGPGRTEAGRRVSSAAEAAIVVLDDSAAPPAPFEHRVVSIKDTLISTSYTVSQHEVLGGGRFGQVHRCTERSTGLALAAKIIKVKNIKDREDVKNEINIMNQLSHVNLIQLYDAFESKNSFTLIMEYVDGGELFDRITDEKYHLTELDVVLFTRQICEGVHYLHQHYILHLDLKPENILCVSQTGHQIKIIDFGLARRYKPREKLKVNFGTPEFLAPEVVNYEFVSFPTDMWSVGVITYMLLSGLSPFLGETDAETMNFIVNCSWDFDADTFKGLSEEAKDFVSRLLVKEKSCRMSATQCLKHEWLNHLIAKASGSNVRLRSQLLLQKYMAQRKWKKHFHVVTAVNRLRKFPTCP.

At Ser-155 the chain carries Phosphoserine. Disordered regions lie at residues 233-258 (EALDPGQEPPPTEAESRLPALASEDT), 279-315 (RMSQSAGEGTSSSKPDCSEPGPQPLGPLTTDSDIHSD), and 333-443 (ELFE…GRRV). Over residues 279–293 (RMSQSAGEGTSSSKP) the composition is skewed to polar residues. 2 positions are modified to phosphoserine: Ser-341 and Ser-422. The Protein kinase domain maps to 482–737 (VSQHEVLGGG…ATQCLKHEWL (256 aa)). ATP is bound by residues 488–496 (LGGGRFGQV) and Lys-511. Asp-603 acts as the Proton acceptor in catalysis.

Belongs to the protein kinase superfamily. CAMK Ser/Thr protein kinase family. Requires Mg(2+) as cofactor. In terms of processing, phosphorylated on serine residues. In terms of tissue distribution, expressed in cardiomyocytes (at protein level). Up-regulated in heart after experimental myocardial infarction at the mRNA level.

It is found in the cytoplasm. The enzyme catalyses L-seryl-[myosin light chain] + ATP = O-phospho-L-seryl-[myosin light chain] + ADP + H(+). It carries out the reaction L-threonyl-[myosin light chain] + ATP = O-phospho-L-threonyl-[myosin light chain] + ADP + H(+). Functionally, calmodulin-dependent kinase that phosphorylates MYL2 in vitro. Promotes sarcomere formation in cardiomyocytes. Increases cardiomyocyte contractility. In Rattus norvegicus (Rat), this protein is Myosin light chain kinase 3 (Mylk3).